The chain runs to 447 residues: Tubulin beta-4 chain (447 aa).

Residues Gln11, Glu69, Ser138, Gly142, Thr143, Gly144, Asn204, and Asn226 each contribute to the GTP site. Glu69 contributes to the Mg(2+) binding site. Residues 423-447 (QQYQDATADEEGEYEDEEQQEADDM) are disordered. A compositionally biased stretch (acidic residues) spans 429–447 (TADEEGEYEDEEQQEADDM).

Belongs to the tubulin family. In terms of assembly, dimer of alpha and beta chains. A typical microtubule is a hollow water-filled tube with an outer diameter of 25 nm and an inner diameter of 15 nM. Alpha-beta heterodimers associate head-to-tail to form protofilaments running lengthwise along the microtubule wall with the beta-tubulin subunit facing the microtubule plus end conferring a structural polarity. Microtubules usually have 13 protofilaments but different protofilament numbers can be found in some organisms and specialized cells. The cofactor is Mg(2+). As to expression, expressed in roots and leaf sheaths.

Its subcellular location is the cytoplasm. It is found in the cytoskeleton. Functionally, tubulin is the major constituent of microtubules, a cylinder consisting of laterally associated linear protofilaments composed of alpha- and beta-tubulin heterodimers. Microtubules grow by the addition of GTP-tubulin dimers to the microtubule end, where a stabilizing cap forms. Below the cap, tubulin dimers are in GDP-bound state, owing to GTPase activity of alpha-tubulin. This is Tubulin beta-4 chain (TUBB4) from Oryza sativa subsp. japonica (Rice).